Consider the following 162-residue polypeptide: Phospholipase A and acyltransferase 3 (162 aa).

The Cytoplasmic segment spans residues 1–133 (MRAPIPEPKP…VARSDQVRDV (133 aa)). In terms of domain architecture, LRAT spans 13–129 (LIEIFRPFYR…LRYGVARSDQ (117 aa)). Active-site residues include histidine 23 and histidine 35. Catalysis depends on cysteine 113, which acts as the Acyl-thioester intermediate. Residues 134–154 (IIAASVAGMGLAAMSLIGVMF) form a helical membrane-spanning segment. Over 155 to 162 (SRNKRQKQ) the chain is Lumenal.

It belongs to the H-rev107 family. In terms of assembly, interacts with PPP2R1A; this interaction might decrease PP2A activity. Widely expressed. Low expression, if any, in hematopoietic cells and thymus. In testis, confined to round spermatids. Expressed in normal ovarian epithelial cells. Down-regulated in some ovarian carcinomas and testicular germ cell tumors. Highly expressed in white adipose tissue.

The protein localises to the cell membrane. It localises to the cytoplasm. The protein resides in the cytosol. It is found in the perinuclear region. Its subcellular location is the peroxisome membrane. The protein localises to the mitochondrion membrane. It localises to the nucleus envelope. The protein resides in the lysosome membrane. It is found in the endoplasmic reticulum membrane. It carries out the reaction a 1,2-diacyl-sn-glycero-3-phosphocholine + H2O = a 1-acyl-sn-glycero-3-phosphocholine + a fatty acid + H(+). It catalyses the reaction a 1,2-diacyl-sn-glycero-3-phosphocholine + H2O = a 2-acyl-sn-glycero-3-phosphocholine + a fatty acid + H(+). The catalysed reaction is 1,2-dihexadecanoyl-sn-glycero-3-phosphocholine + H2O = 1-hexadecanoyl-sn-glycero-3-phosphocholine + hexadecanoate + H(+). The enzyme catalyses 1,2-dihexadecanoyl-sn-glycero-3-phosphocholine + H2O = 2-hexadecanoyl-sn-glycero-3-phosphocholine + hexadecanoate + H(+). It carries out the reaction 1-hexadecanoyl-2-(9Z-octadecenoyl)-sn-glycero-3-phosphocholine + H2O = 2-(9Z-octadecenoyl)-sn-glycero-3-phosphocholine + hexadecanoate + H(+). It catalyses the reaction 1-hexadecanoyl-2-(9Z-octadecenoyl)-sn-glycero-3-phosphocholine + H2O = 1-hexadecanoyl-sn-glycero-3-phosphocholine + (9Z)-octadecenoate + H(+). The catalysed reaction is 1-hexadecanoyl-2-(5Z,8Z,11Z,14Z-eicosatetraenoyl)-sn-glycero-3-phosphocholine + H2O = 1-hexadecanoyl-sn-glycero-3-phosphocholine + (5Z,8Z,11Z,14Z)-eicosatetraenoate + H(+). The enzyme catalyses 1-hexadecanoyl-2-(5Z,8Z,11Z,14Z-eicosatetraenoyl)-sn-glycero-3-phosphocholine + H2O = 2-(5Z,8Z,11Z,14Z)-eicosatetraenoyl-sn-glycero-3-phosphocholine + hexadecanoate + H(+). It carries out the reaction 1-hexadecanoyl-2-(9Z,12Z-octadecadienoyl)-sn-glycero-3-phosphoethanolamine + H2O = 1-hexadecanoyl-sn-glycero-3-phosphoethanolamine + (9Z,12Z)-octadecadienoate + H(+). It catalyses the reaction 1-hexadecanoyl-2-(9Z,12Z-octadecadienoyl)-sn-glycero-3-phosphoethanolamine + H2O = 2-(9Z,12Z)-octadecadienoyl-sn-glycero-3-phosphoethanolamine + hexadecanoate + H(+). The catalysed reaction is 1-hexadecanoyl-2-(5Z,8Z,11Z,14Z-eicosatetraenoyl)-sn-glycero-3-phosphoethanolamine + H2O = 1-hexadecanoyl-sn-glycero-3-phosphoethanolamine + (5Z,8Z,11Z,14Z)-eicosatetraenoate + H(+). The enzyme catalyses 1-hexadecanoyl-2-(5Z,8Z,11Z,14Z-eicosatetraenoyl)-sn-glycero-3-phosphoethanolamine + H2O = 2-(5Z,8Z,11Z,14Z)-eicosatetraenoyl-sn-glycero-3-phosphoethanolamine + hexadecanoate + H(+). It carries out the reaction 1-hexanoyl-2-acyl-sn-glycero-3-phosphocholine + H2O = hexanoate + a 2-acyl-sn-glycero-3-phosphocholine + H(+). It catalyses the reaction 1-hexanoyl-2-acyl-sn-glycero-3-phosphocholine + H2O = 1-hexanoyl-sn-glycero-3-phosphocholine + a fatty acid + H(+). The catalysed reaction is 1,2-diheptadecanoyl-sn-glycero-3-phosphoethanolamine + 1-(9Z-octadecenoyl)-2-hexadecanoyl-sn-glycero-3-phosphocholine = 1,2-diheptadecanoyl-sn-glycero-3-phospho-N-hexadecanoyl-ethanolamine + 1-(9Z-octadecenoyl)-sn-glycero-3-phosphocholine + H(+). The enzyme catalyses 1,2-diheptadecanoyl-sn-glycero-3-phosphoethanolamine + 1-(9Z-octadecenoyl)-2-hexadecanoyl-sn-glycero-3-phosphocholine = 1,2-diheptadecanoyl-sn-glycero-3-phospho-N-(9Z-octadecenoyl)-ethanolamine + 2-hexadecanoyl-sn-glycero-3-phosphocholine + H(+). It carries out the reaction 1,2-dihexanoyl-sn-glycero-3-phosphoethanolamine + 2-heptanoyl-sn-glycero-3-phosphocholine = hexanoyl-sn-glycero-3-phosphoethanolamine + 1-hexanoyl-2-heptanoyl-sn-glycero-3-phosphocholine. It catalyses the reaction 1-hexadecanoyl-2-octadecanoyl-sn-glycero-3-phosphocholine + H2O = octadecanoate + 1-hexadecanoyl-sn-glycero-3-phosphocholine + H(+). The catalysed reaction is 1-hexadecanoyl-2-octadecanoyl-sn-glycero-3-phosphocholine + H2O = 2-octadecanoyl-sn-glycero-3-phosphocholine + hexadecanoate + H(+). The enzyme catalyses 1-octadecanoyl-2-hexadecanoyl-sn-glycero-3-phosphocholine + H2O = 1-octadecanoyl-sn-glycero-3-phosphocholine + hexadecanoate + H(+). It carries out the reaction 1-octadecanoyl-2-hexadecanoyl-sn-glycero-3-phosphocholine + H2O = 2-hexadecanoyl-sn-glycero-3-phosphocholine + octadecanoate + H(+). It catalyses the reaction 1-hexadecanoyl-2-(9Z,12Z-octadecadienoyl)-sn-glycero-3-phosphocholine + H2O = (9Z,12Z)-octadecadienoate + 1-hexadecanoyl-sn-glycero-3-phosphocholine + H(+). The catalysed reaction is 1-hexadecanoyl-2-(9Z,12Z-octadecadienoyl)-sn-glycero-3-phosphocholine + H2O = 2-(9Z,12Z-octadecadienoyl)-sn-glycero-3-phosphocholine + hexadecanoate + H(+). The enzyme catalyses 1,2-di-(9Z-octadecenoyl)-sn-glycero-3-phosphocholine + H2O = 2-(9Z-octadecenoyl)-sn-glycero-3-phosphocholine + (9Z)-octadecenoate + H(+). It carries out the reaction 1,2-dihexadecanoyl-sn-glycero-3-phosphocholine + H2O = hexadecanoyl-sn-glycero-3-phosphocholine + hexadecanoate + H(+). It catalyses the reaction 1,2-di-(9Z-octadecenoyl)-sn-glycero-3-phosphocholine + H2O = 1-(9Z-octadecenoyl)-sn-glycero-3-phosphocholine + (9Z)-octadecenoate + H(+). The catalysed reaction is 1,2-di-(9Z-octadecenoyl)-sn-glycero-3-phosphoethanolamine + 1,2-dihexadecanoyl-sn-glycero-3-phosphocholine = hexadecanoyl-sn-glycero-3-phosphocholine + N-hexadecanoyl-1,2-di-(9Z-octadecenoyl)-sn-glycero-3-phosphoethanolamine + H(+). The enzyme catalyses 1,2-di-(9Z,12Z-octadecadienoyl)-sn-glycero-3-phosphocholine + H2O = 1-(9Z,12Z)-octadecadienoyl-sn-glycero-3-phosphocholine + (9Z,12Z)-octadecadienoate + H(+). Functionally, exhibits both phospholipase A1/2 and acyltransferase activities. Shows phospholipase A1 (PLA1) and A2 (PLA2) activity, catalyzing the calcium-independent release of fatty acids from the sn-1 or sn-2 position of glycerophospholipids. For most substrates, PLA1 activity is much higher than PLA2 activity. Shows O-acyltransferase activity,catalyzing the transfer of a fatty acyl group from glycerophospholipid to the hydroxyl group of lysophospholipid. Shows N-acyltransferase activity, catalyzing the calcium-independent transfer of a fatty acyl group at the sn-1 position of phosphatidylcholine (PC) and other glycerophospholipids to the primary amine of phosphatidylethanolamine (PE), forming N-acylphosphatidylethanolamine (NAPE), which serves as precursor for N-acylethanolamines (NAEs). Exhibits high N-acyltransferase activity and low phospholipase A1/2 activity. Required for complete organelle rupture and degradation that occur during eye lens terminal differentiation, when fiber cells that compose the lens degrade all membrane-bound organelles in order to provide lens with transparency to allow the passage of light. Organelle membrane degradation is probably catalyzed by the phospholipase activity. In terms of biological role, (Microbial infection) Acts as a host factor for picornaviruses: required during early infection to promote viral genome release into the cytoplasm. May act as a cellular sensor of membrane damage at sites of virus entry, which relocalizes to sites of membrane rupture upon virus unfection. Facilitates safe passage of the RNA away from LGALS8, enabling viral genome translation by host ribosome. May also be involved in initiating pore formation, increasing pore size or in maintaining pores for genome delivery. The lipid-modifying enzyme activity is required for this process. The sequence is that of Phospholipase A and acyltransferase 3 from Homo sapiens (Human).